A 577-amino-acid polypeptide reads, in one-letter code: Copine-8 (577 aa).

2 consecutive C2 domains span residues 19–146 (TSAT…RLEK) and 155–278 (KCGT…FNVY). The Ca(2+) site is built by Asp-52, Asp-58, Asp-112, Asp-114, Ser-117, Lys-122, Asp-124, Asp-186, Asp-192, Asp-248, Asp-250, and Asp-256. At Ser-273 the chain carries Phosphoserine. The VWFA domain maps to 322 to 523 (NFTVAIDFTA…VQFVPFRDYI (202 aa)).

The protein belongs to the copine family. It depends on Ca(2+) as a cofactor.

In terms of biological role, probable calcium-dependent phospholipid-binding protein that may play a role in calcium-mediated intracellular processes. This is Copine-8 from Mus musculus (Mouse).